Here is a 174-residue protein sequence, read N- to C-terminus: RNA pyrophosphohydrolase (174 aa).

The Nudix hydrolase domain maps to 6–149; sequence GYRPNVGIIL…KRDVYLEALK (144 aa). The Nudix box signature appears at 38 to 59; that stretch reads GGIKPGESPETAMYRELYEEVG.

It belongs to the Nudix hydrolase family. RppH subfamily. It depends on a divalent metal cation as a cofactor.

Its function is as follows. Accelerates the degradation of transcripts by removing pyrophosphate from the 5'-end of triphosphorylated RNA, leading to a more labile monophosphorylated state that can stimulate subsequent ribonuclease cleavage. This is RNA pyrophosphohydrolase from Neisseria gonorrhoeae (strain ATCC 700825 / FA 1090).